Consider the following 276-residue polypeptide: 3-methyl-2-oxobutanoate hydroxymethyltransferase (276 aa).

Mg(2+) contacts are provided by aspartate 44 and aspartate 83. Residues 44–45 (DS), aspartate 83, and lysine 113 each bind 3-methyl-2-oxobutanoate. Glutamate 115 is a Mg(2+) binding site. Glutamate 182 serves as the catalytic Proton acceptor.

This sequence belongs to the PanB family. As to quaternary structure, homodecamer; pentamer of dimers. Mg(2+) serves as cofactor.

The protein resides in the cytoplasm. It carries out the reaction 3-methyl-2-oxobutanoate + (6R)-5,10-methylene-5,6,7,8-tetrahydrofolate + H2O = 2-dehydropantoate + (6S)-5,6,7,8-tetrahydrofolate. It participates in cofactor biosynthesis; (R)-pantothenate biosynthesis; (R)-pantoate from 3-methyl-2-oxobutanoate: step 1/2. In terms of biological role, catalyzes the reversible reaction in which hydroxymethyl group from 5,10-methylenetetrahydrofolate is transferred onto alpha-ketoisovalerate to form ketopantoate. This chain is 3-methyl-2-oxobutanoate hydroxymethyltransferase, found in Clostridium acetobutylicum (strain ATCC 824 / DSM 792 / JCM 1419 / IAM 19013 / LMG 5710 / NBRC 13948 / NRRL B-527 / VKM B-1787 / 2291 / W).